Here is a 257-residue protein sequence, read N- to C-terminus: Diaminopimelate epimerase (257 aa).

The substrate site is built by Asn-13, Gln-46, and Asn-66. Catalysis depends on Cys-75, which acts as the Proton donor. Residues 76 to 77 (GN), Asn-145, Asn-175, and 193 to 194 (ER) each bind substrate. The active-site Proton acceptor is Cys-202. 203–204 (GS) lines the substrate pocket.

The protein belongs to the diaminopimelate epimerase family. As to quaternary structure, homodimer.

Its subcellular location is the cytoplasm. The catalysed reaction is (2S,6S)-2,6-diaminopimelate = meso-2,6-diaminopimelate. Its pathway is amino-acid biosynthesis; L-lysine biosynthesis via DAP pathway; DL-2,6-diaminopimelate from LL-2,6-diaminopimelate: step 1/1. Functionally, catalyzes the stereoinversion of LL-2,6-diaminopimelate (L,L-DAP) to meso-diaminopimelate (meso-DAP), a precursor of L-lysine and an essential component of the bacterial peptidoglycan. This chain is Diaminopimelate epimerase, found in Gluconobacter oxydans (strain 621H) (Gluconobacter suboxydans).